Reading from the N-terminus, the 121-residue chain is NADH-ubiquinone oxidoreductase chain 3 (121 aa).

The next 3 helical transmembrane spans lie at 11-31 (ILIF…LSYF), 63-83 (FYLV…LFPW), and 90-110 (ISII…IGFI).

It belongs to the complex I subunit 3 family.

Its subcellular location is the mitochondrion membrane. It carries out the reaction a ubiquinone + NADH + 5 H(+)(in) = a ubiquinol + NAD(+) + 4 H(+)(out). Its function is as follows. Core subunit of the mitochondrial membrane respiratory chain NADH dehydrogenase (Complex I) that is believed to belong to the minimal assembly required for catalysis. Complex I functions in the transfer of electrons from NADH to the respiratory chain. The immediate electron acceptor for the enzyme is believed to be ubiquinone. The protein is NADH-ubiquinone oxidoreductase chain 3 (ND3) of Chondrus crispus (Carrageen Irish moss).